The primary structure comprises 153 residues: UPF0311 protein Rpal_1987 (153 aa).

The protein belongs to the UPF0311 family.

This Rhodopseudomonas palustris (strain TIE-1) protein is UPF0311 protein Rpal_1987.